The sequence spans 123 residues: MPTINQLIANPRKIQKSRNKVPALDACPQKRGVCTRVYTTTPKKPNSALRKVAKVRLTNGFEVIGYIPGEGHNLQEHSVVMIRGGRVKDLPGVRYHILRGVLDTQGVKNRKQRRSKYGAKRPK.

Residue Asp-89 is modified to 3-methylthioaspartic acid.

The protein belongs to the universal ribosomal protein uS12 family. In terms of assembly, part of the 30S ribosomal subunit. Contacts proteins S8 and S17. May interact with IF1 in the 30S initiation complex.

Functionally, with S4 and S5 plays an important role in translational accuracy. Its function is as follows. Interacts with and stabilizes bases of the 16S rRNA that are involved in tRNA selection in the A site and with the mRNA backbone. Located at the interface of the 30S and 50S subunits, it traverses the body of the 30S subunit contacting proteins on the other side and probably holding the rRNA structure together. The combined cluster of proteins S8, S12 and S17 appears to hold together the shoulder and platform of the 30S subunit. The protein is Small ribosomal subunit protein uS12 of Methylobacterium sp. (strain 4-46).